Consider the following 210-residue polypeptide: LexA repressor (210 aa).

A DNA-binding region (H-T-H motif) is located at residues 29-49; sequence VREIGEAVDLSSTSTVHGHIS. Catalysis depends on for autocatalytic cleavage activity residues serine 130 and lysine 168.

The protein belongs to the peptidase S24 family. Homodimer.

It catalyses the reaction Hydrolysis of Ala-|-Gly bond in repressor LexA.. Represses a number of genes involved in the response to DNA damage (SOS response), including recA and lexA. In the presence of single-stranded DNA, RecA interacts with LexA causing an autocatalytic cleavage which disrupts the DNA-binding part of LexA, leading to derepression of the SOS regulon and eventually DNA repair. This is LexA repressor from Lactiplantibacillus plantarum (strain ATCC BAA-793 / NCIMB 8826 / WCFS1) (Lactobacillus plantarum).